The primary structure comprises 76 residues: Small ribosomal subunit protein bS18 (76 aa).

This sequence belongs to the bacterial ribosomal protein bS18 family. In terms of assembly, part of the 30S ribosomal subunit. Forms a tight heterodimer with protein bS6.

In terms of biological role, binds as a heterodimer with protein bS6 to the central domain of the 16S rRNA, where it helps stabilize the platform of the 30S subunit. This Xanthomonas campestris pv. campestris (strain 8004) protein is Small ribosomal subunit protein bS18.